We begin with the raw amino-acid sequence, 542 residues long: Protein lin-9 homolog (542 aa).

The residue at position 2 (Ala-2) is an N-acetylalanine. The sufficient for interaction with RB1 stretch occupies residues 2-296 (AELDQLPDES…QKQRPSRFFM (295 aa)). Lys-21 participates in a covalent cross-link: Glycyl lysine isopeptide (Lys-Gly) (interchain with G-Cter in SUMO2). 2 positions are modified to phosphoserine: Ser-65 and Ser-95. A phosphothreonine mark is found at Thr-96 and Thr-304. Phosphoserine is present on residues Ser-309 and Ser-321. Residues 354 to 413 (MIKKEHIKKLREMNTEAEKLKSYSMPISIEFQRRYATIVLELEQLNKDLNKVLHKVQQYC) are a coiled coil.

The protein belongs to the lin-9 family. As to quaternary structure, component of the DREAM complex (also named LINC complex) at least composed of E2F4, E2F5, LIN9, LIN37, LIN52, LIN54, MYBL1, MYBL2, RBL1, RBL2, RBBP4, TFDP1 and TFDP2. The complex exists in quiescent cells where it represses cell cycle-dependent genes. It dissociates in S phase when LIN9, LIN37, LIN52 and LIN54 form a subcomplex that binds to MYBL2. Interacts with RB1. Expressed in thymus and testis.

Its subcellular location is the nucleus. The protein resides in the nucleoplasm. Functionally, acts as a tumor suppressor. Inhibits DNA synthesis. Its ability to inhibit oncogenic transformation is mediated through its association with RB1. Plays a role in the expression of genes required for the G1/S transition. The sequence is that of Protein lin-9 homolog (LIN9) from Homo sapiens (Human).